The primary structure comprises 187 residues: GTP cyclohydrolase 1 (187 aa).

Positions 78, 81, and 150 each coordinate Zn(2+).

Belongs to the GTP cyclohydrolase I family. Homomer.

The enzyme catalyses GTP + H2O = 7,8-dihydroneopterin 3'-triphosphate + formate + H(+). It participates in cofactor biosynthesis; 7,8-dihydroneopterin triphosphate biosynthesis; 7,8-dihydroneopterin triphosphate from GTP: step 1/1. This chain is GTP cyclohydrolase 1, found in Brevibacillus brevis (strain 47 / JCM 6285 / NBRC 100599).